Reading from the N-terminus, the 108-residue chain is Heme oxygenase (staphylobilin-producing) 2 (108 aa).

The 92-residue stretch at 2-93 (FMAENRLQLQ…DDDGQQSPIL (92 aa)) folds into the ABM domain. Residue asparagine 6 participates in Fe cation binding. Residues 21–28 (RFYNRQGI) and histidine 76 each bind heme.

Belongs to the antibiotic biosynthesis monooxygenase family. Heme-degrading monooxygenase IsdG subfamily. Homodimer.

It localises to the cytoplasm. The catalysed reaction is heme b + 5 AH2 + 4 O2 + 2 H(+) = delta-staphylobilin + Fe(2+) + formaldehyde + 5 A + 4 H2O. The enzyme catalyses heme b + 5 AH2 + 4 O2 + 2 H(+) = beta-staphylobilin + Fe(2+) + formaldehyde + 5 A + 4 H2O. In terms of biological role, allows bacterial pathogens to use the host heme as an iron source. Catalyzes the oxidative degradation of the heme macrocyclic porphyrin ring to the oxo-bilirubin chromophore staphylobilin (a mixture of the linear tetrapyrroles 5-oxo-delta-bilirubin and 15-oxo-beta-bilirubin) in the presence of a suitable electron donor such as ascorbate or NADPH--cytochrome P450 reductase, with subsequent release of free iron. The sequence is that of Heme oxygenase (staphylobilin-producing) 2 (isdI) from Staphylococcus aureus (strain MRSA252).